Consider the following 415-residue polypeptide: UDP-N-acetylglucosamine 1-carboxyvinyltransferase 1 (415 aa).

23-24 (KN) provides a ligand contact to phosphoenolpyruvate. Arginine 92 contributes to the UDP-N-acetyl-alpha-D-glucosamine binding site. Catalysis depends on cysteine 116, which acts as the Proton donor. 2-(S-cysteinyl)pyruvic acid O-phosphothioketal is present on cysteine 116. Residues 121–125 (RPIDL), aspartate 304, and valine 326 contribute to the UDP-N-acetyl-alpha-D-glucosamine site.

It belongs to the EPSP synthase family. MurA subfamily.

The protein resides in the cytoplasm. It carries out the reaction phosphoenolpyruvate + UDP-N-acetyl-alpha-D-glucosamine = UDP-N-acetyl-3-O-(1-carboxyvinyl)-alpha-D-glucosamine + phosphate. The protein operates within cell wall biogenesis; peptidoglycan biosynthesis. Cell wall formation. Adds enolpyruvyl to UDP-N-acetylglucosamine. The chain is UDP-N-acetylglucosamine 1-carboxyvinyltransferase 1 from Caldanaerobacter subterraneus subsp. tengcongensis (strain DSM 15242 / JCM 11007 / NBRC 100824 / MB4) (Thermoanaerobacter tengcongensis).